We begin with the raw amino-acid sequence, 345 residues long: Transcription initiation factor IIB (345 aa).

The TFIIB-type zinc-finger motif lies at 8–40 (VGRNCPHCSAVDSLQTDDVMGEVACTACALVVA). Zn(2+)-binding residues include C12, C15, C32, and C35. Disordered regions lie at residues 59 to 89 (DVDHHRERNANPTAATSAAGSLSAADPHMSS) and 318 to 345 (PTAGKRKVDKNSEPEASGGTKRVKREET). A compositionally biased stretch (low complexity) spans 71 to 83 (TAATSAAGSLSAA).

The protein belongs to the TFIIB family. Monomer. Interacts with RNA polymerase II subunits RPB1 and RPB2. Interacts with TBP; the interaction is direct.

The protein localises to the nucleus. In terms of biological role, specifically binds to the promoter of the spliced leader (SL) RNA gene and thus is essential for SLRNA transcription. This Trypanosoma brucei brucei protein is Transcription initiation factor IIB.